The following is a 1489-amino-acid chain: DEAD-box ATP-dependent DNA helicase Fancm (1489 aa).

The region spanning 65-237 (IVQSALFKNT…AVCRNLYISN (173 aa)) is the Helicase ATP-binding domain. Residue 78 to 85 (LPTGLGKT) coordinates ATP. A DEAH box motif is present at residues 185 to 188 (DEAH). A Helicase C-terminal domain is found at 418 to 584 (KLRQVLVQHF…VVKLSLYEQN (167 aa)). Disordered regions lie at residues 591–647 (KFQP…ESQQ), 980–1000 (VEESQRSTPISIADSSGESNH), 1145–1182 (TETIKNSENKNSHEDGSRTVSPDIFGSDSMSPLKPQGK), 1196–1222 (VLPCPPPNSVGLNSPENRKRTNPSIQE), 1255–1293 (NPTISVPKDEEDSPIARRPSKRKIVISSDEEEEQKPQIA), and 1452–1489 (ERRKQRRLGKVPSAPVNKRRRLQTISTSSDEDDVVLID). Basic and acidic residues predominate over residues 594–610 (PKCEEKHMEPVAEEKPK). Positions 611–625 (PKSAAKTKESRKRKQ) are enriched in basic residues. Polar residues predominate over residues 985 to 998 (RSTPISIADSSGES). Positions 1149 to 1161 (KNSENKNSHEDGS) are enriched in basic and acidic residues. Residues 1480 to 1489 (SDEDDVVLID) are compositionally biased toward acidic residues.

It belongs to the DEAD box helicase family. DEAH subfamily. FANCM sub-subfamily.

Its subcellular location is the nucleus. It catalyses the reaction ATP + H2O = ADP + phosphate + H(+). The catalysed reaction is Couples ATP hydrolysis with the unwinding of duplex DNA by translocating in the 3'-5' direction.. In terms of biological role, a ssDNA-dependent ATPase with 3' to 5' helicase activity. Involved in multiple DNA-damage responses, some that require ATPase and helicase activity and some that are independent of these. Involved in DNA interstrand cross-link repair, probably together with Fancl and other Fanconi anemia pathway homologs. Independent of Fancl involved in DNA double strand break repair, including contributing to the synthesis-dependent strand annealing (SDSA) pathway. Probably contributes to SDSA by unwinding short duplex regions in complex D-loop-like DNA structures. The polypeptide is DEAD-box ATP-dependent DNA helicase Fancm (Drosophila melanogaster (Fruit fly)).